The sequence spans 464 residues: V-type ATP synthase beta chain (464 aa).

The protein belongs to the ATPase alpha/beta chains family.

Produces ATP from ADP in the presence of a proton gradient across the membrane. The V-type beta chain is a regulatory subunit. This chain is V-type ATP synthase beta chain, found in Streptococcus sanguinis (strain SK36).